A 129-amino-acid chain; its full sequence is Small ribosomal subunit protein uS11 (129 aa).

Belongs to the universal ribosomal protein uS11 family. As to quaternary structure, part of the 30S ribosomal subunit. Interacts with proteins S7 and S18. Binds to IF-3.

In terms of biological role, located on the platform of the 30S subunit, it bridges several disparate RNA helices of the 16S rRNA. Forms part of the Shine-Dalgarno cleft in the 70S ribosome. This chain is Small ribosomal subunit protein uS11, found in Zymomonas mobilis subsp. mobilis (strain ATCC 31821 / ZM4 / CP4).